The sequence spans 184 residues: ATP synthase subunit b, chloroplastic (184 aa).

Residues 27-49 (LATNPINLSVVLGVLIFFGKGVL) form a helical membrane-spanning segment.

This sequence belongs to the ATPase B chain family. F-type ATPases have 2 components, F(1) - the catalytic core - and F(0) - the membrane proton channel. F(1) has five subunits: alpha(3), beta(3), gamma(1), delta(1), epsilon(1). F(0) has four main subunits: a(1), b(1), b'(1) and c(10-14). The alpha and beta chains form an alternating ring which encloses part of the gamma chain. F(1) is attached to F(0) by a central stalk formed by the gamma and epsilon chains, while a peripheral stalk is formed by the delta, b and b' chains.

It is found in the plastid. It localises to the chloroplast thylakoid membrane. F(1)F(0) ATP synthase produces ATP from ADP in the presence of a proton or sodium gradient. F-type ATPases consist of two structural domains, F(1) containing the extramembraneous catalytic core and F(0) containing the membrane proton channel, linked together by a central stalk and a peripheral stalk. During catalysis, ATP synthesis in the catalytic domain of F(1) is coupled via a rotary mechanism of the central stalk subunits to proton translocation. In terms of biological role, component of the F(0) channel, it forms part of the peripheral stalk, linking F(1) to F(0). The chain is ATP synthase subunit b, chloroplastic from Lepidium virginicum (Virginia pepperweed).